The primary structure comprises 246 residues: MADS-box transcription factor 14 (246 aa).

Residues 1–61 (MGRGKVQLKR…GKLYKYATDS (61 aa)) form the MADS-box domain. The K-box domain maps to 88 to 178 (QGNWCHEYRK…QKELVEKQKV (91 aa)). The interval 180–199 (KQQVQWDQTQPQTSSSSSSF) is disordered.

In terms of tissue distribution, highly expressed in sterile lemmas, at intermediate levels in stamens, and weakly in lemmas, paleas and carpels.

The protein localises to the nucleus. In terms of biological role, probable transcription factor. This is MADS-box transcription factor 14 (MADS14) from Oryza sativa subsp. indica (Rice).